The primary structure comprises 380 residues: N-acetylneuraminate epimerase (380 aa).

A signal peptide spans 1 to 21 (MKFTKTALFTVLAATAFAAQA). Kelch repeat units follow at residues 42-86 (TVYV…AGVN), 88-140 (KLYV…AADG), 142-176 (KIYFVGGVNHEIWNGLFQDVKAAGGDKEKEKAIFD), 177-222 (PYFN…AIKD), 225-274 (LLVV…IAGG), 296-349 (ANYE…SYNN), and 351-380 (VLLIGGETDGGKPLSAVQTMSYDGKKLTVE). Catalysis depends on Glu-231, which acts as the Proton acceptor.

Belongs to the NanM family. Homodimer.

Its subcellular location is the periplasm. It catalyses the reaction N-acetyl-alpha-neuraminate = N-acetyl-beta-neuraminate. Functionally, converts alpha-N-acetylneuranimic acid (Neu5Ac) to the beta-anomer, accelerating the equilibrium between the alpha- and beta-anomers. Probably facilitates sialidase-negative bacteria to compete successfully for limited amounts of extracellular Neu5Ac, which is likely taken up in the beta-anomer. In addition, the rapid removal of sialic acid from solution might be advantageous to the bacterium to damp down host responses. The chain is N-acetylneuraminate epimerase from Pasteurella multocida (strain Pm70).